The primary structure comprises 113 residues: Gamma-glutamylcyclotransferase family protein YtfP (113 aa).

This sequence belongs to the gamma-glutamylcyclotransferase family.

In Escherichia coli O157:H7, this protein is Gamma-glutamylcyclotransferase family protein YtfP (ytfP).